The sequence spans 265 residues: Mlc titration factor A (265 aa).

Residues His111, His148, His152, and Glu211 each contribute to the Zn(2+) site.

Belongs to the MtfA family. Interacts with Mlc. Zn(2+) serves as cofactor.

It is found in the cytoplasm. Functionally, involved in the modulation of the activity of the glucose-phosphotransferase system (glucose-PTS). Interacts with the transcriptional repressor Mlc, preventing its interaction with DNA and leading to the modulation of expression of genes regulated by Mlc, including ptsG, which encodes the PTS system glucose-specific EIICB component. Its function is as follows. Shows zinc-dependent metallopeptidase activity. The sequence is that of Mlc titration factor A from Escherichia coli (strain UTI89 / UPEC).